A 213-amino-acid polypeptide reads, in one-letter code: MKAYQRQFIEFALSKQVLKFGEFTLKSGRISPYFFNAGLFNTGRDLALLGRFYAEALVDSGVEFDLLFGPAYKGIPIATTAAVALAEHHDRDLPYCFNRKEAKDHGEGGSLVGSPLQGRVMLVDDVITAGTAIRESMAIISAHGATLAGVMIALDRQERGRADLSAIQEVERDYQCKVISIITLKELIAYLAEKPEMAAHLDAVKAYREQFGV.

Position 26 (Lys-26) interacts with 5-phospho-alpha-D-ribose 1-diphosphate. 34 to 35 serves as a coordination point for orotate; the sequence is FF. Residues 72 to 73, Arg-99, Lys-100, Lys-103, His-105, and 124 to 132 each bind 5-phospho-alpha-D-ribose 1-diphosphate; these read YK and DDVITAGTA. 2 residues coordinate orotate: Thr-128 and Arg-156.

It belongs to the purine/pyrimidine phosphoribosyltransferase family. PyrE subfamily. In terms of assembly, homodimer. Mg(2+) serves as cofactor.

The catalysed reaction is orotidine 5'-phosphate + diphosphate = orotate + 5-phospho-alpha-D-ribose 1-diphosphate. It participates in pyrimidine metabolism; UMP biosynthesis via de novo pathway; UMP from orotate: step 1/2. Catalyzes the transfer of a ribosyl phosphate group from 5-phosphoribose 1-diphosphate to orotate, leading to the formation of orotidine monophosphate (OMP). The protein is Orotate phosphoribosyltransferase of Pectobacterium carotovorum subsp. carotovorum (strain PC1).